Reading from the N-terminus, the 164-residue chain is 17.8 kDa heat shock protein (164 aa).

In terms of domain architecture, sHSP spans 20 to 154 (VVAGEARPPM…HAGNGKAAGD (135 aa)). The segment at 68–93 (GEHEDANNAAKAGKASGEEEEENDGV) is disordered.

The protein belongs to the small heat shock protein (HSP20) family. May form oligomeric structures.

It localises to the cytoplasm. The chain is 17.8 kDa heat shock protein (HSP17.8) from Oryza sativa subsp. japonica (Rice).